The chain runs to 107 residues: SH3 domain-binding glutamic acid-rich-like protein 2 (107 aa).

Residues 61-67 carry the SH3-binding motif; it reads QGNPLPP.

It belongs to the SH3BGR family.

It localises to the nucleus. This Mus musculus (Mouse) protein is SH3 domain-binding glutamic acid-rich-like protein 2 (Sh3bgrl2).